The sequence spans 367 residues: Cellular tumor antigen p53 (367 aa).

The tract at residues 1–30 is transcription activation (acidic); the sequence is MAEEMEPLLEPTEVFMDLWSMLPYSMQQLP. The disordered stretch occupies residues 30-84; sequence PLPEDHSNWQELSPLEPSDPPPPPPPPPLPLAAAAPPPLNPPTPPRAAPSPVVPS. Positions 46–81 are enriched in pro residues; the sequence is PSDPPPPPPPPPLPLAAAAPPPLNPPTPPRAAPSPV. A DNA-binding region spans residues 87-278; it reads DYGGDFDFRV…KIEEENFRKR (192 aa). Zn(2+) contacts are provided by Cys161, His164, Cys224, and Cys228. The tract at residues 259 to 266 is interaction with DNA; sequence RVCACPGR. Disordered stretches follow at residues 275–303 and 333–367; these read FRKR…KKRV and LAEG…KGSD. A Bipartite nuclear localization signal motif is present at residues 286 to 302; the sequence is KRAMSPPTEAPEPPKKR. The segment at 308–339 is oligomerization; it reads NEIFYLQVRGRRRYEMLKEINEALQLAEGGSA. The Nuclear export signal signature appears at 322–333; the sequence is EMLKEINEALQL. Positions 347–364 are basic (repression of DNA-binding); the sequence is RVKVEGPQPSCGKKLLQK.

Belongs to the p53 family. Binds DNA as a homotetramer. Requires Zn(2+) as cofactor.

It localises to the cytoplasm. The protein localises to the nucleus. Multifunctional transcription factor that induces cell cycle arrest, DNA repair or apoptosis upon binding to its target DNA sequence. Acts as a tumor suppressor in many tumor types; induces growth arrest or apoptosis depending on the physiological circumstances and cell type. Negatively regulates cell division by controlling expression of a set of genes required for this process. One of the activated genes is an inhibitor of cyclin-dependent kinases. Apoptosis induction seems to be mediated either by stimulation of BAX and FAS antigen expression, or by repression of Bcl-2 expression. The polypeptide is Cellular tumor antigen p53 (TP53) (Gallus gallus (Chicken)).